The chain runs to 419 residues: Inositol-tetrakisphosphate 1-kinase (419 aa).

Lys18 lines the 1D-myo-inositol 1,3,4-trisphosphate pocket. Residues Arg106 and Lys157 each contribute to the ATP site. An ATP-grasp domain is found at 117-325; it reads EAYMKDDRIC…IASVLQGQSS (209 aa). 1D-myo-inositol 1,3,4-trisphosphate contacts are provided by His167 and Lys199. ATP-binding positions include 188–199, Ser214, Ser232, and Ser236; that span reads QNFINHNAVLYK. Mg(2+) contacts are provided by Asp281, Asp295, and Asn297. Asn297 is a 1D-myo-inositol 1,3,4-trisphosphate binding site. Lys388 carries the N6-acetyllysine; by EP300 and CREBBP modification. Ser401 carries the phosphoserine modification. N6-acetyllysine; by EP300 and CREBBP is present on Lys415.

Belongs to the ITPK1 family. As to quaternary structure, monomer. Interacts with GPS1/COPS1. It depends on Mg(2+) as a cofactor. Acetylation by EP300 and CREBBP destabilizes ITPK1, and down-regulates enzymatic activity. Deacetylated by SIRT1.

It catalyses the reaction 1D-myo-inositol 3,4,5,6-tetrakisphosphate + ATP = 1D-myo-inositol 1,3,4,5,6-pentakisphosphate + ADP + H(+). It carries out the reaction 1D-myo-inositol 1,3,4-trisphosphate + ATP = 1D-myo-inositol 1,3,4,5-tetrakisphosphate + ADP + H(+). The catalysed reaction is 1D-myo-inositol 1,3,4-trisphosphate + ATP = 1D-myo-inositol 1,3,4,6-tetrakisphosphate + ADP + H(+). The enzyme catalyses 1D-myo-inositol 3,4,6-trisphosphate + ATP = 1D-myo-inositol 1,3,4,6-tetrakisphosphate + ADP + H(+). It catalyses the reaction 1D-myo-inositol 1,3,4-trisphosphate + 1D-myo-inositol 1,3,4,5,6-pentakisphosphate = 1D-myo-inositol 3,4,5,6-tetrakisphosphate + 1D-myo-inositol 1,3,4,6-tetrakisphosphate. It carries out the reaction 1D-myo-inositol 1,3,4-trisphosphate + 1D-myo-inositol 1,3,4,5,6-pentakisphosphate = 1D-myo-inositol 3,4,5,6-tetrakisphosphate + 1D-myo-inositol 1,3,4,5-tetrakisphosphate. In terms of biological role, kinase that can phosphorylate various inositol polyphosphate such as Ins(3,4,5,6)P4 or Ins(1,3,4)P3. Phosphorylates Ins(3,4,5,6)P4 at position 1 to form Ins(1,3,4,5,6)P5. This reaction is thought to have regulatory importance, since Ins(3,4,5,6)P4 is an inhibitor of plasma membrane Ca(2+)-activated Cl(-) channels, while Ins(1,3,4,5,6)P5 is not. Also phosphorylates Ins(1,3,4)P3 on O-5 and O-6 to form Ins(1,3,4,6)P4, an essential molecule in the hexakisphosphate (InsP6) pathway. Also acts as an inositol polyphosphate phosphatase that dephosphorylates Ins(1,3,4,5)P4 and Ins(1,3,4,6)P4 to Ins(1,3,4)P3, and Ins(1,3,4,5,6)P5 to Ins(3,4,5,6)P4. May also act as an isomerase that interconverts the inositol tetrakisphosphate isomers Ins(1,3,4,5)P4 and Ins(1,3,4,6)P4 in the presence of ADP and magnesium. Probably acts as the rate-limiting enzyme of the InsP6 pathway. Modifies TNF-alpha-induced apoptosis by interfering with the activation of TNFRSF1A-associated death domain. Plays an important role in MLKL-mediated necroptosis. Produces highly phosphorylated inositol phosphates such as inositolhexakisphosphate (InsP6) which bind to MLKL mediating the release of an N-terminal auto-inhibitory region leading to its activation. Essential for activated phospho-MLKL to oligomerize and localize to the cell membrane during necroptosis. This is Inositol-tetrakisphosphate 1-kinase (ITPK1) from Bos taurus (Bovine).